We begin with the raw amino-acid sequence, 180 residues long: Large ribosomal subunit protein uL18m (180 aa).

The protein belongs to the universal ribosomal protein uL18 family. Component of the mitochondrial ribosome large subunit (39S) which comprises a 16S rRNA and about 50 distinct proteins.

It is found in the mitochondrion. Together with thiosulfate sulfurtransferase (TST), acts as a mitochondrial import factor for the cytosolic 5S rRNA. The precursor form shows RNA chaperone activity; is able to fold the 5S rRNA into an import-competent conformation that is recognized by rhodanese (TST). Both the cytoplasmic and mitochondrial forms are able to bind to the helix IV-loop D in the gamma domain of the 5S rRNA. The protein is Large ribosomal subunit protein uL18m (MRPL18) of Bos taurus (Bovine).